The sequence spans 382 residues: Mannitol-1-phosphate 5-dehydrogenase (382 aa).

Ala3 to Gly14 contributes to the NAD(+) binding site.

This sequence belongs to the mannitol dehydrogenase family.

The catalysed reaction is D-mannitol 1-phosphate + NAD(+) = beta-D-fructose 6-phosphate + NADH + H(+). The sequence is that of Mannitol-1-phosphate 5-dehydrogenase from Erwinia tasmaniensis (strain DSM 17950 / CFBP 7177 / CIP 109463 / NCPPB 4357 / Et1/99).